A 174-amino-acid polypeptide reads, in one-letter code: Single-stranded DNA-binding protein 1 (174 aa).

The SSB domain maps to 6 to 111 (VNKVILVGNL…VVVNVGGTMQ (106 aa)). A DNA-binding region spans residues 55–61 (WHRVVLF). The segment at 110 to 174 (MQMLGGRQGG…PMDFDDDIPF (65 aa)) is disordered. Over residues 115–133 (GRQGGGAPAGGGQQQGGWG) the composition is skewed to gly residues. Low complexity predominate over residues 134-160 (QPQQPQGGNQFSGGAQSRPQQQAPAAP). The Important for interaction with partner proteins motif lies at 169-174 (DDDIPF).

As to quaternary structure, homotetramer. Binds PriA via its C-terminus.

Functionally, plays an important role in DNA replication, recombination and repair. Binds to ssDNA and to an array of partner proteins to recruit them to their sites of action during DNA metabolism. Stimulates the ATPase activity of PriA. One tetramer binds to 26 nucleotides (nt) of ssDNA, a 55 nt piece of ssDNA probably binds 2 tetramers. The chain is Single-stranded DNA-binding protein 1 from Klebsiella pneumoniae subsp. pneumoniae (strain ATCC 700721 / MGH 78578).